A 479-amino-acid polypeptide reads, in one-letter code: tRNA-dihydrouridine(20) synthase [NAD(P)+] (479 aa).

FMN is bound by residues 14–16 and Gln-87; that span reads PMV. Cys-116 acts as the Proton donor in catalysis. FMN contacts are provided by residues Lys-159, His-187, 221 to 223, and 245 to 246; these read NGD and AR.

It belongs to the Dus family. Dus2 subfamily. It depends on FMN as a cofactor.

It localises to the cytoplasm. The protein resides in the nucleus. The enzyme catalyses 5,6-dihydrouridine(20) in tRNA + NADP(+) = uridine(20) in tRNA + NADPH + H(+). The catalysed reaction is 5,6-dihydrouridine(20) in tRNA + NAD(+) = uridine(20) in tRNA + NADH + H(+). It carries out the reaction a 5,6-dihydrouridine in mRNA + NAD(+) = a uridine in mRNA + NADH + H(+). It catalyses the reaction a 5,6-dihydrouridine in mRNA + NADP(+) = a uridine in mRNA + NADPH + H(+). In terms of biological role, catalyzes the NADPH-dependent synthesis of dihydrouridine, a modified base found in the D-loop of most tRNAs. Specifically modifies U20 in cytoplasmic tRNAs. Also able to mediate dihydrouridylation of some mRNAs, thereby affecting their translation. In Schizosaccharomyces pombe (strain 972 / ATCC 24843) (Fission yeast), this protein is tRNA-dihydrouridine(20) synthase [NAD(P)+].